Consider the following 329-residue polypeptide: Ribonucleoside-diphosphate reductase subunit beta (329 aa).

The Fe cation site is built by aspartate 66, glutamate 97, and histidine 101. Residue tyrosine 105 is part of the active site. 3 residues coordinate Fe cation: glutamate 164, glutamate 198, and histidine 201.

This sequence belongs to the ribonucleoside diphosphate reductase small chain family. As to quaternary structure, tetramer of two alpha and two beta subunits. It depends on Fe cation as a cofactor.

The enzyme catalyses a 2'-deoxyribonucleoside 5'-diphosphate + [thioredoxin]-disulfide + H2O = a ribonucleoside 5'-diphosphate + [thioredoxin]-dithiol. Its function is as follows. Provides the precursors necessary for DNA synthesis. Catalyzes the biosynthesis of deoxyribonucleotides from the corresponding ribonucleotides. In Bacillus pumilus (Bacillus mesentericus), this protein is Ribonucleoside-diphosphate reductase subunit beta (bnrdF).